We begin with the raw amino-acid sequence, 168 residues long: Photosystem I assembly protein Ycf3 (168 aa).

TPR repeat units follow at residues 35–68 (AFTYYRDGMSAQSEGNYAEALQNYYEAMRLEIDP), 72–105 (SYILYNIGLIHTSNGEHTKALEYYFRALERNPFL), and 120–153 (GEQAIRQGDSEIAEAWFDQAAEYWKQAIALTPGN).

This sequence belongs to the Ycf3 family.

It is found in the plastid. The protein localises to the chloroplast thylakoid membrane. Functionally, essential for the assembly of the photosystem I (PSI) complex. May act as a chaperone-like factor to guide the assembly of the PSI subunits. The protein is Photosystem I assembly protein Ycf3 of Populus alba (White poplar).